Reading from the N-terminus, the 465-residue chain is GTPase Der (465 aa).

EngA-type G domains follow at residues 3–166 (FLVA…LNEY) and 184–358 (IHFS…ACAS). Residues 9-16 (GRANVGKS), 56-60 (DTGGI), 118-121 (NKVD), 190-197 (GRPNVGKS), 237-241 (DTAGV), and 302-305 (NKWD) each bind GTP. The region spanning 359 to 443 (KKITTADATR…PIVFEFKQSE (85 aa)) is the KH-like domain. Residues 446–465 (FADRKNKRSKDEGSKSKKVK) are disordered.

The protein belongs to the TRAFAC class TrmE-Era-EngA-EngB-Septin-like GTPase superfamily. EngA (Der) GTPase family. As to quaternary structure, associates with the 50S ribosomal subunit.

In terms of biological role, GTPase that plays an essential role in the late steps of ribosome biogenesis. The protein is GTPase Der of Francisella tularensis subsp. tularensis (strain FSC 198).